Reading from the N-terminus, the 610-residue chain is Glutamine--fructose-6-phosphate aminotransferase [isomerizing] (610 aa).

The active-site Nucleophile; for GATase activity is the Cys-2. One can recognise a Glutamine amidotransferase type-2 domain in the interval Cys-2–Arg-218. 2 consecutive SIS domains span residues Ala-286–Arg-426 and Leu-459–Pro-600. The For Fru-6P isomerization activity role is filled by Lys-605.

As to quaternary structure, homodimer.

The protein localises to the cytoplasm. The enzyme catalyses D-fructose 6-phosphate + L-glutamine = D-glucosamine 6-phosphate + L-glutamate. Functionally, catalyzes the first step in hexosamine metabolism, converting fructose-6P into glucosamine-6P using glutamine as a nitrogen source. This chain is Glutamine--fructose-6-phosphate aminotransferase [isomerizing], found in Vibrio vulnificus (strain CMCP6).